Here is a 278-residue protein sequence, read N- to C-terminus: Putative protein-disulfide oxidoreductase RF_0032 (278 aa).

Residues 1–18 (MRSIFIVPIFLLFLSSCS) form the signal peptide. Residues 62-84 (VPANDNNQTDEVSTPPSQEQKNP) form a disordered region. Residues 65-81 (NDNNQTDEVSTPPSQEQ) are compositionally biased toward polar residues. In terms of domain architecture, Thioredoxin spans 77–266 (PSQEQKNPEI…ISTAVDKALE (190 aa)). A disulfide bond links Cys119 and Cys122.

It belongs to the thioredoxin family. DsbA subfamily.

It localises to the periplasm. Functionally, may be required for disulfide bond formation in some proteins. The protein is Putative protein-disulfide oxidoreductase RF_0032 of Rickettsia felis (strain ATCC VR-1525 / URRWXCal2) (Rickettsia azadi).